The following is a 228-amino-acid chain: Large ribosomal subunit protein uL3 (228 aa).

Residues 135–159 (MKSQRASHGNSRSHNVPGSIGMAQD) are disordered. The segment covering 140 to 150 (ASHGNSRSHNV) has biased composition (polar residues). Glutamine 158 carries the N5-methylglutamine modification.

It belongs to the universal ribosomal protein uL3 family. Part of the 50S ribosomal subunit. Forms a cluster with proteins L14 and L19. Post-translationally, methylated by PrmB.

Functionally, one of the primary rRNA binding proteins, it binds directly near the 3'-end of the 23S rRNA, where it nucleates assembly of the 50S subunit. This chain is Large ribosomal subunit protein uL3, found in Albidiferax ferrireducens (strain ATCC BAA-621 / DSM 15236 / T118) (Rhodoferax ferrireducens).